We begin with the raw amino-acid sequence, 442 residues long: Histidine--tRNA ligase (442 aa).

It belongs to the class-II aminoacyl-tRNA synthetase family. Homodimer.

It is found in the cytoplasm. The enzyme catalyses tRNA(His) + L-histidine + ATP = L-histidyl-tRNA(His) + AMP + diphosphate + H(+). The sequence is that of Histidine--tRNA ligase (hisS) from Treponema pallidum (strain Nichols).